A 202-amino-acid polypeptide reads, in one-letter code: ATP-dependent Clp protease proteolytic subunit (202 aa).

The active-site Nucleophile is the serine 106. The active site involves histidine 131.

The protein belongs to the peptidase S14 family. Fourteen ClpP subunits assemble into 2 heptameric rings which stack back to back to give a disk-like structure with a central cavity, resembling the structure of eukaryotic proteasomes.

The protein resides in the cytoplasm. It carries out the reaction Hydrolysis of proteins to small peptides in the presence of ATP and magnesium. alpha-casein is the usual test substrate. In the absence of ATP, only oligopeptides shorter than five residues are hydrolyzed (such as succinyl-Leu-Tyr-|-NHMec, and Leu-Tyr-Leu-|-Tyr-Trp, in which cleavage of the -Tyr-|-Leu- and -Tyr-|-Trp bonds also occurs).. Its function is as follows. Cleaves peptides in various proteins in a process that requires ATP hydrolysis. Has a chymotrypsin-like activity. Plays a major role in the degradation of misfolded proteins. In Verminephrobacter eiseniae (strain EF01-2), this protein is ATP-dependent Clp protease proteolytic subunit.